The chain runs to 185 residues: Large ribosomal subunit protein uL5 (185 aa).

This sequence belongs to the universal ribosomal protein uL5 family. As to quaternary structure, part of the 50S ribosomal subunit; part of the 5S rRNA/L5/L18/L25 subcomplex. Contacts the 5S rRNA and the P site tRNA. Forms a bridge to the 30S subunit in the 70S ribosome.

This is one of the proteins that bind and probably mediate the attachment of the 5S RNA into the large ribosomal subunit, where it forms part of the central protuberance. In the 70S ribosome it contacts protein S13 of the 30S subunit (bridge B1b), connecting the 2 subunits; this bridge is implicated in subunit movement. Contacts the P site tRNA; the 5S rRNA and some of its associated proteins might help stabilize positioning of ribosome-bound tRNAs. The polypeptide is Large ribosomal subunit protein uL5 (Treponema pallidum (strain Nichols)).